A 757-amino-acid chain; its full sequence is Filensin (757 aa).

The head stretch occupies residues 1–39 (MYRRSYVFQTRKEQYERAEEAPRAAEPDRLAEARAAAPN). Serine 5 carries the phosphoserine modification. The IF rod domain maps to 39-319 (NLAALQGLGE…RIIENEGNRL (281 aa)). Positions 40–74 (LAALQGLGERVAAHVQRARALEQRHAVLRRQLDAF) are coil 1A. An N-acetylalanine modification is found at alanine 41. The linker 1 stretch occupies residues 75 to 83 (QRLDELAGP). A coil 1B region spans residues 84 to 183 (EDALARHVEG…RYKKNLLEIQ (100 aa)). The linker 12 stretch occupies residues 184 to 200 (TYVTILQQIIQTTPQAA). The coil 2 stretch occupies residues 201 to 319 (AITSGMREEK…RIIENEGNRL (119 aa)). The tract at residues 320-756 (SSAFIETPIT…KKLGEKGSSS (437 aa)) is tail. A phosphoserine mark is found at serine 340 and serine 419. Disordered regions lie at residues 406–436 (EGESKLEPGDEEASPPTQEGAPEDVPDGGKI) and 493–705 (GVVV…PPRK). Glycine 433 is lipidated: N-myristoyl glycine. The span at 493 to 512 (GVVVSKGDDSVPPDSGVEPS) shows a compositional bias: low complexity. Serine 512 is modified (phosphoserine). Basic and acidic residues predominate over residues 528-658 (QEKEDGLKEE…KQDDQKEEGA (131 aa)). Copy 1 of the repeat occupies 532-545 (DGLKEEGGPPEGKG). The interval 532 to 622 (DGLKEEGGPP…EEEGPLQKKE (91 aa)) is 7 X 14 AA tandem repeats. One copy of the 2; truncated repeat lies at 546–552 (EPPEGKG). 5 tandem repeats follow at residues 553–566 (DSVKEEGGPPEGKG), 567–580 (DGVKEEGGPPEGKG), 581–594 (DGVKEEGGPPEGKG), 595–608 (DGVKKEGEPPEGKG), and 609–622 (EGLKEEEGPLQKKE). Phosphothreonine occurs at positions 628 and 674. Serine 701, serine 754, and serine 755 each carry phosphoserine.

It belongs to the intermediate filament family. As to quaternary structure, part of a complex required for lens intermediate filament formation composed of BFSP1, BFSP2 and CRYAA. Identified in a complex that contains VIM, EZR, AHNAK, BFSP1, BFSP2, ANK2, PLEC, PRX and spectrin. Found in a complex composed of PPL (via C-terminal linker domain), BFSP1 and BFSP2 in the retinal lens. Within the complex interacts with BFSP2. Interacts (via C-terminus) with MIP (via C-terminus) in aged lens fiber cells. In terms of processing, proteolytically cleaved during lens cell fiber differentiation with increased fragmentation as fiber cell age increases. Post-translationally, myristoylated at Gly-433 following proteolytic cleavage at Asp-432. Acetylated at Ala-41 following proteolytic cleavage at Leu-40. As to expression, abundantly expressed in both the inner and outer cortex of the retina, expressed at a lower level in the nucleus of the retina (at protein level). Detected in eye lens fiber cells (at protein level).

Its subcellular location is the cell membrane. It is found in the cytoplasm. It localises to the cytoskeleton. The protein localises to the cell cortex. Required for the correct formation of lens intermediate filaments as part of a complex composed of BFSP1, BFSP2 and CRYAA. Involved in altering the calcium regulation of MIP water permeability. In Bos taurus (Bovine), this protein is Filensin (BFSP1).